A 165-amino-acid polypeptide reads, in one-letter code: Small ribosomal subunit protein uS5 (165 aa).

The 64-residue stretch at 13–76 (LEEKVLVVNR…EAARKNLITI (64 aa)) folds into the S5 DRBM domain.

Belongs to the universal ribosomal protein uS5 family. Part of the 30S ribosomal subunit. Contacts proteins S4 and S8.

Its function is as follows. With S4 and S12 plays an important role in translational accuracy. In terms of biological role, located at the back of the 30S subunit body where it stabilizes the conformation of the head with respect to the body. This is Small ribosomal subunit protein uS5 from Chlamydia abortus (strain DSM 27085 / S26/3) (Chlamydophila abortus).